The chain runs to 157 residues: 2-amino-4-hydroxy-6-hydroxymethyldihydropteridine pyrophosphokinase (157 aa).

This sequence belongs to the HPPK family.

The catalysed reaction is 6-hydroxymethyl-7,8-dihydropterin + ATP = (7,8-dihydropterin-6-yl)methyl diphosphate + AMP + H(+). Its pathway is cofactor biosynthesis; tetrahydrofolate biosynthesis; 2-amino-4-hydroxy-6-hydroxymethyl-7,8-dihydropteridine diphosphate from 7,8-dihydroneopterin triphosphate: step 4/4. Its function is as follows. Catalyzes the transfer of pyrophosphate from adenosine triphosphate (ATP) to 6-hydroxymethyl-7,8-dihydropterin, an enzymatic step in folate biosynthesis pathway. The protein is 2-amino-4-hydroxy-6-hydroxymethyldihydropteridine pyrophosphokinase (folK) of Campylobacter jejuni subsp. jejuni serotype O:2 (strain ATCC 700819 / NCTC 11168).